Here is a 540-residue protein sequence, read N- to C-terminus: Exopolysaccharide phosphotransferase SCO6022 (540 aa).

This sequence belongs to the stealth family.

This is Exopolysaccharide phosphotransferase SCO6022 from Streptomyces coelicolor (strain ATCC BAA-471 / A3(2) / M145).